The following is a 56-amino-acid chain: MFDHRILEILVCPLTKDKLQYNKDTNELISEKAKLAFPIRDGIPIMLIDEARKLEE.

Belongs to the UPF0434 family.

The protein is UPF0434 protein ECH_0194 of Ehrlichia chaffeensis (strain ATCC CRL-10679 / Arkansas).